We begin with the raw amino-acid sequence, 434 residues long: D-amino acid dehydrogenase (434 aa).

3–17 is an FAD binding site; that stretch reads VVILGSGVVGVASAW.

The protein belongs to the DadA oxidoreductase family. FAD is required as a cofactor.

It carries out the reaction a D-alpha-amino acid + A + H2O = a 2-oxocarboxylate + AH2 + NH4(+). It participates in amino-acid degradation; D-alanine degradation; NH(3) and pyruvate from D-alanine: step 1/1. Its function is as follows. Oxidative deamination of D-amino acids. The chain is D-amino acid dehydrogenase from Serratia proteamaculans (strain 568).